Here is a 327-residue protein sequence, read N- to C-terminus: MHLFKDSLNLIVSSGNGGAGCVSFLREKFKAKGGPDGGDGGRGGDVIFKVKSNLKTLSLYRNGQKLSASNGKSGMGLKKSGAAGSDLIIFVPPNTSIYDADSNCMLFELKNFNDEVVVLKGGRGGLGNVNFKSSTKRTPRFAQPGESGLTLNLRLELSLIADVGLVGLPNAGKSSLISKITASRSKVANYPFTTKIPHFGVVRVSYNDLIIADLPGIIEGASKGIGLGFEFLRHISKTQILVFLIDVSSNDFMSAYDILINELRVYDIGLLKKKRIIVASKLDLEGATENFNQLKSILSEERVLGISIYDNIGINELVSEFFSLAKI.

The Obg domain occupies 2 to 160 (HLFKDSLNLI…LNLRLELSLI (159 aa)). The OBG-type G domain maps to 161-326 (ADVGLVGLPN…LVSEFFSLAK (166 aa)). GTP contacts are provided by residues 167 to 174 (GLPNAGKS), 192 to 196 (FTTKI), 213 to 216 (DLPG), 280 to 283 (SKLD), and 307 to 309 (SIY). Residues Ser174 and Thr194 each contribute to the Mg(2+) site.

This sequence belongs to the TRAFAC class OBG-HflX-like GTPase superfamily. OBG GTPase family. Monomer. Mg(2+) serves as cofactor.

Its subcellular location is the cytoplasm. Functionally, an essential GTPase which binds GTP, GDP and possibly (p)ppGpp with moderate affinity, with high nucleotide exchange rates and a fairly low GTP hydrolysis rate. Plays a role in control of the cell cycle, stress response, ribosome biogenesis and in those bacteria that undergo differentiation, in morphogenesis control. This is GTPase Obg from Borrelia recurrentis (strain A1).